Reading from the N-terminus, the 856-residue chain is Translation initiation factor IF-2 (856 aa).

In terms of domain architecture, tr-type G spans 356-526 (PRAPVVTVMG…LLIADLLELK (171 aa)). A G1 region spans residues 365–372 (GHVDHGKT). 365-372 (GHVDHGKT) serves as a coordination point for GTP. The segment at 390-394 (GITQH) is G2. The tract at residues 412-415 (DTPG) is G3. GTP contacts are provided by residues 412–416 (DTPGH) and 466–469 (NKID). Residues 466 to 469 (NKID) are G4. The segment at 502–504 (SAK) is G5.

It belongs to the TRAFAC class translation factor GTPase superfamily. Classic translation factor GTPase family. IF-2 subfamily.

The protein localises to the cytoplasm. One of the essential components for the initiation of protein synthesis. Protects formylmethionyl-tRNA from spontaneous hydrolysis and promotes its binding to the 30S ribosomal subunits. Also involved in the hydrolysis of GTP during the formation of the 70S ribosomal complex. This Ehrlichia ruminantium (strain Gardel) protein is Translation initiation factor IF-2.